A 321-amino-acid chain; its full sequence is Large ribosomal RNA subunit accumulation protein YCED homolog 1, chloroplastic (321 aa).

A chloroplast-targeting transit peptide spans methionine 1–serine 32.

The protein belongs to the DUF177 domain family.

It localises to the plastid. The protein resides in the chloroplast stroma. The protein localises to the chloroplast nucleoid. In terms of biological role, plays a role in synthesis, processing and/or stability of 23S rRNA. Required for embryogenesis. This chain is Large ribosomal RNA subunit accumulation protein YCED homolog 1, chloroplastic, found in Arabidopsis thaliana (Mouse-ear cress).